The chain runs to 426 residues: UDP-N-acetylglucosamine--N-acetylmuramyl-(pentapeptide) pyrophosphoryl-undecaprenol N-acetylglucosamine transferase (426 aa).

UDP-N-acetyl-alpha-D-glucosamine-binding positions include T28 to G30, N140, R176, S204, I257, and Q302. The tract at residues A369 to R388 is disordered.

The protein belongs to the glycosyltransferase 28 family. MurG subfamily.

It is found in the cell inner membrane. The catalysed reaction is di-trans,octa-cis-undecaprenyl diphospho-N-acetyl-alpha-D-muramoyl-L-alanyl-D-glutamyl-meso-2,6-diaminopimeloyl-D-alanyl-D-alanine + UDP-N-acetyl-alpha-D-glucosamine = di-trans,octa-cis-undecaprenyl diphospho-[N-acetyl-alpha-D-glucosaminyl-(1-&gt;4)]-N-acetyl-alpha-D-muramoyl-L-alanyl-D-glutamyl-meso-2,6-diaminopimeloyl-D-alanyl-D-alanine + UDP + H(+). It functions in the pathway cell wall biogenesis; peptidoglycan biosynthesis. Cell wall formation. Catalyzes the transfer of a GlcNAc subunit on undecaprenyl-pyrophosphoryl-MurNAc-pentapeptide (lipid intermediate I) to form undecaprenyl-pyrophosphoryl-MurNAc-(pentapeptide)GlcNAc (lipid intermediate II). This Xanthomonas axonopodis pv. citri (strain 306) protein is UDP-N-acetylglucosamine--N-acetylmuramyl-(pentapeptide) pyrophosphoryl-undecaprenol N-acetylglucosamine transferase.